We begin with the raw amino-acid sequence, 509 residues long: Putative cytochrome P450 CYP13A8 (509 aa).

Residue C455 coordinates heme.

Belongs to the cytochrome P450 family. Heme serves as cofactor.

Its function is as follows. Cytochromes P450 are a group of heme-thiolate monooxygenases. They oxidize a variety of structurally unrelated compounds, including steroids, fatty acids, and xenobiotics. This is Putative cytochrome P450 CYP13A8 (cyp-13A8) from Caenorhabditis elegans.